The following is a 118-amino-acid chain: MRVKGGVNSKKKKRKYLKAAKGYRGALSRRYRLAKQYYIRSGVYAYVGRKQKKRDFRKLWITRINAAARMEGIKYSELIHGLKLSGVNINRKMLADLAVNDFEAFKEYVALAKEALGK.

Belongs to the bacterial ribosomal protein bL20 family.

Functionally, binds directly to 23S ribosomal RNA and is necessary for the in vitro assembly process of the 50S ribosomal subunit. It is not involved in the protein synthesizing functions of that subunit. In Kosmotoga olearia (strain ATCC BAA-1733 / DSM 21960 / TBF 19.5.1), this protein is Large ribosomal subunit protein bL20.